The sequence spans 274 residues: Probable eukaryotic translation initiation factor 3 subunit J (274 aa).

2 disordered regions span residues 1–110 (MDSW…KEAM) and 207–245 (KEQQ…NVNS). Over residues 38 to 47 (DEEDEDEEEN) the composition is skewed to acidic residues. The span at 52–73 (QNDSHSVSQKSSSSSQNDQGSN) shows a compositional bias: low complexity. The span at 82-110 (IQERNFEKAIKASEAAAKEESLESSKEAM) shows a compositional bias: basic and acidic residues. A compositionally biased stretch (low complexity) spans 219 to 234 (AAAPAAKPVSTAAPSK).

This sequence belongs to the eIF-3 subunit J family. In terms of assembly, component of the eukaryotic translation initiation factor 3 (eIF-3) complex. The eIF-3 complex appears to include tif32/eif3a, SPAC25G10.08/eif3b, tif33/eif3c, SPBC4C3.07/eif3f, tif35/eif3g and sum1/eif3i. This set of common subunits may also associate exclusively with either moe1/eif3d and int6/eif3e, or with SPAC821.05/eif3h and SPAC1751.03/eif3m. The eIF-3 complex may also include SPAC3A12.13c/eif3j. Interacts with sad1.

The protein resides in the cytoplasm. In terms of biological role, component of the eukaryotic translation initiation factor 3 (eIF-3) complex, which is involved in protein synthesis of a specialized repertoire of mRNAs and, together with other initiation factors, stimulates binding of mRNA and methionyl-tRNAi to the 40S ribosome. The eIF-3 complex specifically targets and initiates translation of a subset of mRNAs involved in cell proliferation. The chain is Probable eukaryotic translation initiation factor 3 subunit J from Schizosaccharomyces pombe (strain 972 / ATCC 24843) (Fission yeast).